The sequence spans 449 residues: Glutamyl-tRNA reductase (449 aa).

Substrate is bound by residues threonine 58–arginine 61, serine 121, glutamate 126–glutamine 128, and glutamine 132. The active-site Nucleophile is cysteine 59. Residue glycine 203–alanine 208 coordinates NADP(+).

It belongs to the glutamyl-tRNA reductase family. Homodimer.

It catalyses the reaction (S)-4-amino-5-oxopentanoate + tRNA(Glu) + NADP(+) = L-glutamyl-tRNA(Glu) + NADPH + H(+). Its pathway is porphyrin-containing compound metabolism; protoporphyrin-IX biosynthesis; 5-aminolevulinate from L-glutamyl-tRNA(Glu): step 1/2. In terms of biological role, catalyzes the NADPH-dependent reduction of glutamyl-tRNA(Glu) to glutamate 1-semialdehyde (GSA). In Helicobacter pylori (strain J99 / ATCC 700824) (Campylobacter pylori J99), this protein is Glutamyl-tRNA reductase.